The primary structure comprises 345 residues: Ryncolin-1 (345 aa).

Positions 1 to 19 (MKPWAAFHLIFLVASSLEG) are cleaved as a signal peptide. A disordered region spans residues 48–118 (ILQSQPGIPG…DKGDKGEDCN (71 aa)). The Collagen-like domain occupies 57-114 (GIPGVPGTNGSEGLKGDPGPQGPPGIRGPDGIRGEAGPKGDKGDQGDKGDKGDKGDKG). Residues 86-116 (DGIRGEAGPKGDKGDQGDKGDKGDKGDKGED) show a composition bias toward basic and acidic residues. One can recognise a Fibrinogen C-terminal domain in the interval 121-339 (GCLPTEVRNC…YADMKIRPQQ (219 aa)). Intrachain disulfides connect Cys130–Cys158 and Cys282–Cys295.

It belongs to the ficolin lectin family. Veficolin subfamily. Hydroxylated, possibly at Pro-80. In terms of tissue distribution, expressed by the venom duct.

The protein resides in the secreted. Its function is as follows. Initiates complement activation and/or interferes in platelet aggregation and/or blood coagulation. The sequence is that of Ryncolin-1 from Cerberus rynchops (Dog-faced water snake).